The following is a 146-amino-acid chain: MASRRRARQRALQILFIWDARKQPVEDAINAYYDTLYSDEKPERDPFVIDLVRGTVEHLAEVDDRITRHAEHWRMERMPAVDRNILRLAVYEMTRGGTPAPVTIDEALELARKFSNEESVQFVNGVLDAVRREMPEPNAPPARLNS.

It belongs to the NusB family.

Its function is as follows. Involved in transcription antitermination. Required for transcription of ribosomal RNA (rRNA) genes. Binds specifically to the boxA antiterminator sequence of the ribosomal RNA (rrn) operons. This chain is Transcription antitermination protein NusB, found in Solibacter usitatus (strain Ellin6076).